We begin with the raw amino-acid sequence, 488 residues long: Glutamyl-tRNA(Gln) amidotransferase subunit A (488 aa).

Catalysis depends on charge relay system residues lysine 77 and serine 152. Residue serine 176 is the Acyl-ester intermediate of the active site.

The protein belongs to the amidase family. GatA subfamily. As to quaternary structure, heterotrimer of A, B and C subunits.

It catalyses the reaction L-glutamyl-tRNA(Gln) + L-glutamine + ATP + H2O = L-glutaminyl-tRNA(Gln) + L-glutamate + ADP + phosphate + H(+). Allows the formation of correctly charged Gln-tRNA(Gln) through the transamidation of misacylated Glu-tRNA(Gln) in organisms which lack glutaminyl-tRNA synthetase. The reaction takes place in the presence of glutamine and ATP through an activated gamma-phospho-Glu-tRNA(Gln). In Streptococcus pneumoniae (strain Hungary19A-6), this protein is Glutamyl-tRNA(Gln) amidotransferase subunit A.